Here is a 161-residue protein sequence, read N- to C-terminus: Large ribosomal subunit protein uL11 (161 aa).

This sequence belongs to the universal ribosomal protein uL11 family. In terms of assembly, part of the ribosomal stalk of the 50S ribosomal subunit. Interacts with L10 and the large rRNA to form the base of the stalk. L10 forms an elongated spine to which L12 dimers bind in a sequential fashion forming a multimeric L10(L12)X complex.

Functionally, forms part of the ribosomal stalk which helps the ribosome interact with GTP-bound translation factors. This Methanosarcina mazei (strain ATCC BAA-159 / DSM 3647 / Goe1 / Go1 / JCM 11833 / OCM 88) (Methanosarcina frisia) protein is Large ribosomal subunit protein uL11.